The sequence spans 376 residues: Carboxylic ester hydrolase LipN (376 aa).

Active-site residues include Ser216, Asp316, and His346.

The protein belongs to the 'GDXG' lipolytic enzyme family.

The protein localises to the cytoplasm. The catalysed reaction is a carboxylic ester + H2O = an alcohol + a carboxylate + H(+). It carries out the reaction an acetyl ester + H2O = an aliphatic alcohol + acetate + H(+). It catalyses the reaction a butanoate ester + H2O = an aliphatic alcohol + butanoate + H(+). The enzyme catalyses an octanoate ester + H2O = an aliphatic alcohol + octanoate + H(+). The catalysed reaction is decanoate ester + H2O = decanoate + an aliphatic alcohol + H(+). It carries out the reaction a dodecanoate ester + H2O = an aliphatic alcohol + dodecanoate + H(+). It catalyses the reaction 1,2,3-tributanoylglycerol + H2O = dibutanoylglycerol + butanoate + H(+). The enzyme catalyses 4-acetoxyphenol + H2O = hydroquinone + acetate + H(+). Its activity is regulated as follows. Completely inhibited by tetrahydrolipstatin (THL), RHC-80267 and N-bromosuccinimide. Its function is as follows. Non specific carboxylic ester hydrolase. Hydrolyzes various pNP-esters, with a preference for short carbon chain substrates. Can also hydrolyze tributyrin to di- and monobutyrin and 4-hydroxyphenylacetate to hydroquinone. This Mycobacterium tuberculosis (strain ATCC 25618 / H37Rv) protein is Carboxylic ester hydrolase LipN.